Here is a 227-residue protein sequence, read N- to C-terminus: Enolase-phosphatase E1 (227 aa).

The protein belongs to the HAD-like hydrolase superfamily. MasA/MtnC family. As to quaternary structure, monomer. It depends on Mg(2+) as a cofactor.

It catalyses the reaction 5-methylsulfanyl-2,3-dioxopentyl phosphate + H2O = 1,2-dihydroxy-5-(methylsulfanyl)pent-1-en-3-one + phosphate. Its pathway is amino-acid biosynthesis; L-methionine biosynthesis via salvage pathway; L-methionine from S-methyl-5-thio-alpha-D-ribose 1-phosphate: step 3/6. It participates in amino-acid biosynthesis; L-methionine biosynthesis via salvage pathway; L-methionine from S-methyl-5-thio-alpha-D-ribose 1-phosphate: step 4/6. Its function is as follows. Bifunctional enzyme that catalyzes the enolization of 2,3-diketo-5-methylthiopentyl-1-phosphate (DK-MTP-1-P) into the intermediate 2-hydroxy-3-keto-5-methylthiopentenyl-1-phosphate (HK-MTPenyl-1-P), which is then dephosphorylated to form the acireductone 1,2-dihydroxy-3-keto-5-methylthiopentene (DHK-MTPene). The chain is Enolase-phosphatase E1 from Methylococcus capsulatus (strain ATCC 33009 / NCIMB 11132 / Bath).